The primary structure comprises 1802 residues: U3 small nucleolar RNA-associated protein 10 (1802 aa).

One copy of the HEAT 1 repeat lies at 581–618 (MDLQALLPFVLVTLADPSERVRREAAGILTIIGSLHKN). Transmembrane regions (helical) follow at residues 946–966 (VQSG…AIVN) and 1002–1022 (ALLL…HSVM). 4 HEAT repeats span residues 1046–1083 (QTID…AFEH), 1253–1290 (LSLV…QNPE), 1297–1335 (TRML…KYGK), and 1758–1795 (ALLP…VLGE).

It belongs to the HEATR1/UTP10 family. As to quaternary structure, component of the ribosomal small subunit (SSU) processome.

Its subcellular location is the nucleus. It is found in the nucleolus. The protein localises to the membrane. In terms of biological role, involved in nucleolar processing of pre-18S ribosomal RNA. Involved in ribosome biosynthesis. The sequence is that of U3 small nucleolar RNA-associated protein 10 from Aspergillus oryzae (strain ATCC 42149 / RIB 40) (Yellow koji mold).